We begin with the raw amino-acid sequence, 336 residues long: tRNA N6-adenosine threonylcarbamoyltransferase (336 aa).

Positions 114 and 118 each coordinate Fe cation. Substrate-binding positions include 136–140 (LVSGG), Asp169, Gly182, Asp186, and Asn275. Position 301 (Asp301) interacts with Fe cation.

This sequence belongs to the KAE1 / TsaD family. It depends on Fe(2+) as a cofactor.

Its subcellular location is the cytoplasm. The catalysed reaction is L-threonylcarbamoyladenylate + adenosine(37) in tRNA = N(6)-L-threonylcarbamoyladenosine(37) in tRNA + AMP + H(+). Functionally, required for the formation of a threonylcarbamoyl group on adenosine at position 37 (t(6)A37) in tRNAs that read codons beginning with adenine. Is involved in the transfer of the threonylcarbamoyl moiety of threonylcarbamoyl-AMP (TC-AMP) to the N6 group of A37, together with TsaE and TsaB. TsaD likely plays a direct catalytic role in this reaction. This chain is tRNA N6-adenosine threonylcarbamoyltransferase, found in Streptococcus pneumoniae (strain Hungary19A-6).